The sequence spans 357 residues: tRNA N6-adenosine threonylcarbamoyltransferase (357 aa).

Fe cation-binding residues include histidine 113 and histidine 117. Substrate contacts are provided by residues 136 to 140, aspartate 169, glycine 182, and asparagine 288; that span reads LVSGG. Fe cation is bound at residue aspartate 316.

The protein belongs to the KAE1 / TsaD family. Fe(2+) serves as cofactor.

It is found in the cytoplasm. The enzyme catalyses L-threonylcarbamoyladenylate + adenosine(37) in tRNA = N(6)-L-threonylcarbamoyladenosine(37) in tRNA + AMP + H(+). Its function is as follows. Required for the formation of a threonylcarbamoyl group on adenosine at position 37 (t(6)A37) in tRNAs that read codons beginning with adenine. Is involved in the transfer of the threonylcarbamoyl moiety of threonylcarbamoyl-AMP (TC-AMP) to the N6 group of A37, together with TsaE and TsaB. TsaD likely plays a direct catalytic role in this reaction. In Gemmatimonas aurantiaca (strain DSM 14586 / JCM 11422 / NBRC 100505 / T-27), this protein is tRNA N6-adenosine threonylcarbamoyltransferase.